We begin with the raw amino-acid sequence, 474 residues long: Cryptochrome DASH (474 aa).

In terms of domain architecture, Photolyase/cryptochrome alpha/beta spans Asp2 to Leu136. A compositionally biased stretch (basic and acidic residues) spans Glu161–Ser171. The segment at Glu161 to Asp202 is disordered.

Belongs to the DNA photolyase class-1 family. It depends on FAD as a cofactor. (6R)-5,10-methylene-5,6,7,8-tetrahydrofolate serves as cofactor.

Its function is as follows. May have a photoreceptor function. Binds DNA; probably functions as a transcriptional repressor. The sequence is that of Cryptochrome DASH (cry) from Natronomonas pharaonis (strain ATCC 35678 / DSM 2160 / CIP 103997 / JCM 8858 / NBRC 14720 / NCIMB 2260 / Gabara) (Halobacterium pharaonis).